Consider the following 303-residue polypeptide: Phenoloxidase-activating factor 2 (303 aa).

The interval 1 to 24 (PDRRPPEDPITPPPPTKEEQRAGC) is disordered. Residues 36–292 (IIGDKDGEAK…LRDWIDDKVA (257 aa)) form the Peptidase S1 domain. Intrachain disulfides connect cysteine 173–cysteine 247, cysteine 206–cysteine 227, and cysteine 237–cysteine 268.

It belongs to the peptidase S1 family. As to quaternary structure, heterodimer.

Its subcellular location is the secreted. Its function is as follows. Binds and activates processed prophenoloxidases PPO1 and PPO2 and thus is involved in the activation of the prophenoloxidase cascade probably following the recognition of pathogen-derived products. Binds the A.niger cell wall component alpha-1,3-glucan, a fungal pathogen-associated molecular pattern (PAMP) that activates the host immune response. This chain is Phenoloxidase-activating factor 2 (LOC113510063), found in Galleria mellonella (Greater wax moth).